The chain runs to 30 residues: Uperin-6.2 (30 aa).

In terms of tissue distribution, expressed by the skin dorsal glands.

The protein localises to the secreted. This is Uperin-6.2 from Uperoleia inundata (Floodplain toadlet).